Here is a 450-residue protein sequence, read N- to C-terminus: tRNA modification GTPase MnmE (450 aa).

Residues Arg-21, Glu-80, and Lys-119 each coordinate (6S)-5-formyl-5,6,7,8-tetrahydrofolate. The TrmE-type G domain occupies 213–373 (GIKVVIIGKP…LEEEIIKSVK (161 aa)). Asn-223 contacts K(+). Residues 223–228 (NVGKST), 242–248 (TDIPGTT), and 267–270 (DTAG) contribute to the GTP site. Ser-227 serves as a coordination point for Mg(2+). Residues Thr-242, Ile-244, and Thr-247 each coordinate K(+). Thr-248 contributes to the Mg(2+) binding site. Lys-450 is a binding site for (6S)-5-formyl-5,6,7,8-tetrahydrofolate.

The protein belongs to the TRAFAC class TrmE-Era-EngA-EngB-Septin-like GTPase superfamily. TrmE GTPase family. In terms of assembly, homodimer. Heterotetramer of two MnmE and two MnmG subunits. It depends on K(+) as a cofactor.

It is found in the cytoplasm. Functionally, exhibits a very high intrinsic GTPase hydrolysis rate. Involved in the addition of a carboxymethylaminomethyl (cmnm) group at the wobble position (U34) of certain tRNAs, forming tRNA-cmnm(5)s(2)U34. The protein is tRNA modification GTPase MnmE of Pseudothermotoga lettingae (strain ATCC BAA-301 / DSM 14385 / NBRC 107922 / TMO) (Thermotoga lettingae).